The following is a 717-amino-acid chain: DNA-binding protein RFX2 (717 aa).

The disordered stretch occupies residues Met-1–Gln-28. Residue Ser-26 is modified to Phosphoserine. The segment at residues His-194–Pro-269 is a DNA-binding region (RFX-type winged-helix). The disordered stretch occupies residues Arg-286–Pro-318. The residue at position 411 (Ser-411) is a Phosphoserine. Residues Asp-685–Pro-710 are compositionally biased toward basic and acidic residues. Positions Asp-685–Ile-717 are disordered.

It belongs to the RFX family. As to quaternary structure, homodimer; probably only forms homodimers in testis. Heterodimer; heterodimerizes with RFX1 and RFX3.

Its subcellular location is the nucleus. The protein localises to the cytoplasm. Functionally, transcription factor that acts as a key regulator of spermatogenesis. Acts by regulating expression of genes required for the haploid phase during spermiogenesis, such as genes required for cilium assembly and function. Recognizes and binds the X-box, a regulatory motif with DNA sequence 5'-GTNRCC(0-3N)RGYAAC-3' present on promoters. Probably activates transcription of the testis-specific histone gene H1-6. The chain is DNA-binding protein RFX2 (Rfx2) from Mus musculus (Mouse).